The sequence spans 1027 residues: MHRASLICRLASPSRINSIRSASSYGNNTISATPLVQQRKQSVAASVKHEPFLNGSSSVYIEQMYETWLENPSSVHTSWDAYFRNVEAGAGPGQAFQAPPSVAYAGSMGVPSAPITSAAPATRLDTNASVQSISDHLKIQLLIRSYQTRGHNIADLDPLGINSADLDDTIPPELELSFYGLGERDLDREFLLPPTTFISEKKSLTLREILQRLKEIYCTSTGVEYMHLNNLEQQDWIRRRFEAPRVTELSHDQKKVLFKRLIRSTKFEEFLAKKWPSEKRFGLEGCEVLIPAIKQVIDSSSTLGVDSFVIGMPHRGRLNVLANVCRQPLATILSQFSTLEPADEGSGDVKYHLGVCIERLNRQSQKNVKIAVVANPSHLEAVDPVVMGKVRAEAFYAGDEKCDRTMAILLHGDAAFAGQGVVLETFNLDDLPSYTTHGAIHIVVNNQIGFTTDPRSSRSSPYCTDVGRVVGCPIFHVNVDDPEAVMHVCNVAADWRKTFKKDVIVDLVCYRRHGHNELDEPMFTQPLMYQRIKQTKTALEKYQEKILNEGVANEQYVKEELTKYGAILEDAYENAQKVTYVRNRDWLDSPWDDFFKKRDPLKLPSTGIEQENIEHIIGKFGSYPEGFNLHRGLERTLKGRQQMLKDNSLDWACGEALAFGSLLKEGIHVRLSGQDVERGTFSHRHHVLHDQKVDQKIYNPLNDLADPQGEYTVCNSSLSEYAVLGFELGYSMVDPNSLVIWEAQFGDFSNTAQCIIDQFVSSGQSKWIRQSGLVMLLPHGYEGMGPEHSSARPERFLQMCNEDDEIDLDKIAFGGTFEAQQLHDTNWIVANCTTPANIYHLLRRQVTMPFRKPAVVFSPKSLLRHPMARSPVEDFQSGSNFQRIIPETGAPSQNPPNVQRLVFCTGKVYYDMVAARKHVGKENDVALVRVEQLSPFPYDLVQQECRKYQGAEIIWAQEEHKNMGAWSFVQPRINSLLSIDGRATKYAGRLPSSSPATGNKYTHMQEQKEMMSKVFGVPKSKLEGFKA.

5 residues coordinate thiamine diphosphate: arginine 315, aspartate 413, asparagine 446, isoleucine 448, and glutamine 674. The Mg(2+) site is built by aspartate 413, asparagine 446, and isoleucine 448.

It belongs to the alpha-ketoglutarate dehydrogenase family. As to quaternary structure, homodimer. Component of the 2-oxoglutarate dehydrogenase complex. Thiamine diphosphate is required as a cofactor. Mg(2+) serves as cofactor.

The protein resides in the mitochondrion matrix. It catalyses the reaction N(6)-[(R)-lipoyl]-L-lysyl-[protein] + 2-oxoglutarate + H(+) = N(6)-[(R)-S(8)-succinyldihydrolipoyl]-L-lysyl-[protein] + CO2. The 2-oxoglutarate dehydrogenase complex catalyzes the overall conversion of 2-oxoglutarate to succinyl-CoA and CO(2). It contains multiple copies of three enzymatic components: 2-oxoglutarate dehydrogenase (E1), dihydrolipoamide succinyltransferase (E2) and lipoamide dehydrogenase (E3). The chain is 2-oxoglutarate dehydrogenase, mitochondrial (ogdh-1) from Caenorhabditis briggsae.